Consider the following 440-residue polypeptide: Adenylosuccinate synthetase (440 aa).

GTP contacts are provided by residues 13–19 (GDEGKGK) and 41–43 (GHT). Catalysis depends on Asp14, which acts as the Proton acceptor. Mg(2+) is bound by residues Asp14 and Gly41. Residues 14-17 (DEGK), 39-42 (NAGH), Thr135, Arg149, Gln230, Thr245, and Arg313 each bind IMP. Catalysis depends on His42, which acts as the Proton donor. Substrate is bound at residue 309–315 (TVTKRKR). GTP is bound by residues Arg315, 341–343 (KLD), and 423–425 (STG).

This sequence belongs to the adenylosuccinate synthetase family. As to quaternary structure, homodimer. Mg(2+) is required as a cofactor.

It localises to the cytoplasm. The catalysed reaction is IMP + L-aspartate + GTP = N(6)-(1,2-dicarboxyethyl)-AMP + GDP + phosphate + 2 H(+). Its pathway is purine metabolism; AMP biosynthesis via de novo pathway; AMP from IMP: step 1/2. In terms of biological role, plays an important role in the de novo pathway of purine nucleotide biosynthesis. Catalyzes the first committed step in the biosynthesis of AMP from IMP. This chain is Adenylosuccinate synthetase, found in Methylobacillus flagellatus (strain ATCC 51484 / DSM 6875 / VKM B-1610 / KT).